The following is a 264-amino-acid chain: NAD-capped RNA hydrolase NudC (264 aa).

Arginine 70 serves as a coordination point for substrate. Zn(2+)-binding residues include cysteine 99 and cysteine 102. Residue glutamate 112 participates in substrate binding. Residues cysteine 117 and cysteine 120 each contribute to the Zn(2+) site. Substrate is bound at residue tyrosine 125. The 128-residue stretch at 126 to 253 folds into the Nudix hydrolase domain; it reads PVICPSIIVA…TIARKLIHVT (128 aa). Residues alanine 162, glutamate 178, and glutamate 182 each coordinate a divalent metal cation. The short motif at 163-184 is the Nudix box element; sequence GFVEVGETFEQAVQREVFEETG. 196-203 is a substrate binding site; the sequence is QPWAFPNS. An a divalent metal cation-binding site is contributed by glutamate 223. Position 246 (alanine 246) interacts with substrate.

It belongs to the Nudix hydrolase family. NudC subfamily. In terms of assembly, homodimer. It depends on Mg(2+) as a cofactor. Requires Mn(2+) as cofactor. Zn(2+) is required as a cofactor.

The enzyme catalyses a 5'-end NAD(+)-phospho-ribonucleoside in mRNA + H2O = a 5'-end phospho-adenosine-phospho-ribonucleoside in mRNA + beta-nicotinamide D-ribonucleotide + 2 H(+). It carries out the reaction NAD(+) + H2O = beta-nicotinamide D-ribonucleotide + AMP + 2 H(+). The catalysed reaction is NADH + H2O = reduced beta-nicotinamide D-ribonucleotide + AMP + 2 H(+). In terms of biological role, mRNA decapping enzyme that specifically removes the nicotinamide adenine dinucleotide (NAD) cap from a subset of mRNAs by hydrolyzing the diphosphate linkage to produce nicotinamide mononucleotide (NMN) and 5' monophosphate mRNA. The NAD-cap is present at the 5'-end of some mRNAs and stabilizes RNA against 5'-processing. Has preference for mRNAs with a 5'-end purine. Catalyzes the hydrolysis of a broad range of dinucleotide pyrophosphates. In Haemophilus influenzae (strain 86-028NP), this protein is NAD-capped RNA hydrolase NudC.